The chain runs to 490 residues: Protein nucleotidyltransferase YdiU (490 aa).

ATP is bound by residues Gly94, Gly96, Arg97, Lys117, Asp129, Gly130, Arg180, and Arg187. Asp256 (proton acceptor) is an active-site residue. Mg(2+) contacts are provided by Asn257 and Asp266. ATP is bound at residue Asp266.

The protein belongs to the SELO family. Mg(2+) is required as a cofactor. Mn(2+) serves as cofactor.

The catalysed reaction is L-seryl-[protein] + ATP = 3-O-(5'-adenylyl)-L-seryl-[protein] + diphosphate. It carries out the reaction L-threonyl-[protein] + ATP = 3-O-(5'-adenylyl)-L-threonyl-[protein] + diphosphate. The enzyme catalyses L-tyrosyl-[protein] + ATP = O-(5'-adenylyl)-L-tyrosyl-[protein] + diphosphate. It catalyses the reaction L-histidyl-[protein] + UTP = N(tele)-(5'-uridylyl)-L-histidyl-[protein] + diphosphate. The catalysed reaction is L-seryl-[protein] + UTP = O-(5'-uridylyl)-L-seryl-[protein] + diphosphate. It carries out the reaction L-tyrosyl-[protein] + UTP = O-(5'-uridylyl)-L-tyrosyl-[protein] + diphosphate. In terms of biological role, nucleotidyltransferase involved in the post-translational modification of proteins. It can catalyze the addition of adenosine monophosphate (AMP) or uridine monophosphate (UMP) to a protein, resulting in modifications known as AMPylation and UMPylation. The polypeptide is Protein nucleotidyltransferase YdiU (Clostridium perfringens (strain 13 / Type A)).